Consider the following 147-residue polypeptide: Arginine vasopressin-induced protein 1 (147 aa).

Disordered regions lie at residues 1–24 (MGTPASVVSEPPPWQAPIEARGRK) and 104–147 (LANP…QIRH). A compositionally biased stretch (polar residues) spans 105-119 (ANPQSATETASSEQY). The span at 121 to 134 (HSRKKSARIRRNWR) shows a compositional bias: basic residues. Over residues 137–147 (GPTSYLHQIRH) the composition is skewed to polar residues.

Its function is as follows. May be involved in MAP kinase activation, epithelial sodium channel (ENaC) down-regulation and cell cycling. The polypeptide is Arginine vasopressin-induced protein 1 (AVPI1) (Homo sapiens (Human)).